The primary structure comprises 279 residues: Probable flavonol synthase 4 (279 aa).

Residues 1–25 are disordered; that stretch reads MEVERDQHKPPLSLQNNKIPSSQNF. Residues 13–25 are compositionally biased toward polar residues; that stretch reads SLQNNKIPSSQNF. Residues 156–256 enclose the Fe2OG dioxygenase domain; that stretch reads GAGYLMKINY…RMSSVVHIKP (101 aa). 164 to 166 serves as a coordination point for 2-oxoglutarate; sequence NYY. Residues His181, Asp183, and His237 each contribute to the Fe cation site. 247 to 249 lines the 2-oxoglutarate pocket; the sequence is RMS.

The protein belongs to the iron/ascorbate-dependent oxidoreductase family. Fe(2+) is required as a cofactor.

It catalyses the reaction a (2R,3R)-dihydroflavonol + 2-oxoglutarate + O2 = a flavonol + succinate + CO2 + H2O. The protein operates within secondary metabolite biosynthesis; flavonoid biosynthesis. The sequence is that of Probable flavonol synthase 4 (FLS4) from Arabidopsis thaliana (Mouse-ear cress).